Reading from the N-terminus, the 150-residue chain is Cytochrome c oxidase subunit 5A, mitochondrial (150 aa).

The transit peptide at 1–41 (MLGAALRRCAVAATTRADPRGLLHSARTPGPAVAIQSVRCY) directs the protein to the mitochondrion. The SIFI-degron signature appears at 2 to 17 (LGAALRRCAVAATTRA). Residues Lys87 and Lys113 each carry the N6-acetyllysine modification. At Thr141 the chain carries Phosphothreonine.

This sequence belongs to the cytochrome c oxidase subunit 5A family. As to quaternary structure, component of the cytochrome c oxidase (complex IV, CIV), a multisubunit enzyme composed of 14 subunits. The complex is composed of a catalytic core of 3 subunits MT-CO1, MT-CO2 and MT-CO3, encoded in the mitochondrial DNA, and 11 supernumerary subunits COX4I1 (or COX4I2), COX5A, COX5B, COX6A1 (or COX6A2), COX6B1 (or COX6B2), COX6C, COX7A2 (or COX7A1), COX7B, COX7C, COX8A and NDUFA4, which are encoded in the nuclear genome. The complex exists as a monomer or a dimer and forms supercomplexes (SCs) in the inner mitochondrial membrane with NADH-ubiquinone oxidoreductase (complex I, CI) and ubiquinol-cytochrome c oxidoreductase (cytochrome b-c1 complex, complex III, CIII), resulting in different assemblies (supercomplex SCI(1)III(2)IV(1) and megacomplex MCI(2)III(2)IV(2)). Interacts with AFG1L. Interacts with RAB5IF. Post-translationally, in response to mitochondrial stress, the precursor protein is ubiquitinated by the SIFI complex in the cytoplasm before mitochondrial import, leading to its degradation. Within the SIFI complex, UBR4 initiates ubiquitin chain that are further elongated or branched by KCMF1.

It is found in the mitochondrion inner membrane. It functions in the pathway energy metabolism; oxidative phosphorylation. In terms of biological role, component of the cytochrome c oxidase, the last enzyme in the mitochondrial electron transport chain which drives oxidative phosphorylation. The respiratory chain contains 3 multisubunit complexes succinate dehydrogenase (complex II, CII), ubiquinol-cytochrome c oxidoreductase (cytochrome b-c1 complex, complex III, CIII) and cytochrome c oxidase (complex IV, CIV), that cooperate to transfer electrons derived from NADH and succinate to molecular oxygen, creating an electrochemical gradient over the inner membrane that drives transmembrane transport and the ATP synthase. Cytochrome c oxidase is the component of the respiratory chain that catalyzes the reduction of oxygen to water. Electrons originating from reduced cytochrome c in the intermembrane space (IMS) are transferred via the dinuclear copper A center (CU(A)) of subunit 2 and heme A of subunit 1 to the active site in subunit 1, a binuclear center (BNC) formed by heme A3 and copper B (CU(B)). The BNC reduces molecular oxygen to 2 water molecules using 4 electrons from cytochrome c in the IMS and 4 protons from the mitochondrial matrix. This is Cytochrome c oxidase subunit 5A, mitochondrial (COX5A) from Homo sapiens (Human).